The sequence spans 176 residues: HTH-type transcriptional regulator DctR (176 aa).

The 66-residue stretch at 109 to 174 folds into the HTH luxR-type domain; that stretch reads VPEANVSLSR…ELVRHQHIDY (66 aa). Residues 133 to 152 constitute a DNA-binding region (H-T-H motif); sequence TEDILEKLKISLKTFYCHKH.

May act as a transcriptional regulator of dctA. Could be involved in the regulation of the genes coding for the type III secretion system in enterohaemorragic strains. The protein is HTH-type transcriptional regulator DctR (dctR) of Escherichia coli O157:H7.